Consider the following 359-residue polypeptide: Cytosolic sulfotransferase 15 (359 aa).

101–106 is a 3'-phosphoadenylyl sulfate binding site; that stretch reads KSGTTW. The active-site Proton acceptor is H168. 3'-phosphoadenylyl sulfate contacts are provided by residues R190, S198, Y256, and 322–324; that span reads RKG.

The protein belongs to the sulfotransferase 1 family. In terms of tissue distribution, expressed in leaves.

The protein resides in the cytoplasm. It catalyses the reaction a 12-hydroxyjasmonate + 3'-phosphoadenylyl sulfate = a 12-sulfojasmonate + adenosine 3',5'-bisphosphate + H(+). In terms of biological role, sulfotransferase that utilizes 3'-phospho-5'-adenylyl sulfate (PAPS) as sulfonate donor to specifically catalyze the sulfate conjugation of hydroxyjasmonates, with a preference for 12-hydroxyjasmonate over 11-hydroxyjasmonate. No activity with 12-hydroxyjasmonic acid methyl ester, cucurbic acid, 7-iso-cucurbic acid, 6-epi-cucurbic acid, 6-epi-7-iso-cucurbic acid and their methyl esters, prostaglandin E2, arachidonyl alcohol and 11-eicosenol. In Arabidopsis thaliana (Mouse-ear cress), this protein is Cytosolic sulfotransferase 15 (SOT15).